Consider the following 212-residue polypeptide: Neuroendocrine protein 7B2 (212 aa).

The N-terminal stretch at 1-26 (MVSRMVSTMLSGLLFWLASGWTPAFA) is a signal peptide. The cysteines at positions 120 and 130 are disulfide-linked. Serine 141 and serine 205 each carry phosphoserine. The segment at 174–212 (GGERRKRRSVNPYLQGQRLDNVVAKKSVPHFSDEDKDPE) is disordered.

This sequence belongs to the 7B2 family. In terms of assembly, interacts with PCSK2/PC2 early in the secretory pathway. Dissociation occurs at later stages. Proteolytically cleaved in the Golgi by a furin-like convertase to generate bioactive peptides. Post-translationally, sulfated on tyrosine residues.

It is found in the secreted. Acts as a molecular chaperone for PCSK2/PC2, preventing its premature activation in the regulated secretory pathway. Binds to inactive PCSK2 in the endoplasmic reticulum and facilitates its transport from there to later compartments of the secretory pathway where it is proteolytically matured and activated. Also required for cleavage of PCSK2 but does not appear to be involved in its folding. Plays a role in regulating pituitary hormone secretion. The C-terminal peptide inhibits PCSK2 in vitro. This is Neuroendocrine protein 7B2 (SCG5) from Homo sapiens (Human).